We begin with the raw amino-acid sequence, 477 residues long: Aspartyl/glutamyl-tRNA(Asn/Gln) amidotransferase subunit B (477 aa).

It belongs to the GatB/GatE family. GatB subfamily. As to quaternary structure, heterotrimer of A, B and C subunits.

It carries out the reaction L-glutamyl-tRNA(Gln) + L-glutamine + ATP + H2O = L-glutaminyl-tRNA(Gln) + L-glutamate + ADP + phosphate + H(+). The enzyme catalyses L-aspartyl-tRNA(Asn) + L-glutamine + ATP + H2O = L-asparaginyl-tRNA(Asn) + L-glutamate + ADP + phosphate + 2 H(+). Allows the formation of correctly charged Asn-tRNA(Asn) or Gln-tRNA(Gln) through the transamidation of misacylated Asp-tRNA(Asn) or Glu-tRNA(Gln) in organisms which lack either or both of asparaginyl-tRNA or glutaminyl-tRNA synthetases. The reaction takes place in the presence of glutamine and ATP through an activated phospho-Asp-tRNA(Asn) or phospho-Glu-tRNA(Gln). This chain is Aspartyl/glutamyl-tRNA(Asn/Gln) amidotransferase subunit B, found in Bdellovibrio bacteriovorus (strain ATCC 15356 / DSM 50701 / NCIMB 9529 / HD100).